The primary structure comprises 196 residues: Flagellar transcriptional regulator FlhC (196 aa).

4 residues coordinate Zn(2+): Cys138, Cys141, Cys158, and Cys161.

The protein belongs to the FlhC family. As to quaternary structure, heterohexamer composed of two FlhC and four FlhD subunits. Each FlhC binds a FlhD dimer, forming a heterotrimer, and a hexamer assembles by dimerization of two heterotrimers. Zn(2+) is required as a cofactor.

The protein resides in the cytoplasm. Its function is as follows. Functions in complex with FlhD as a master transcriptional regulator that regulates transcription of several flagellar and non-flagellar operons by binding to their promoter region. Activates expression of class 2 flagellar genes, including fliA, which is a flagellum-specific sigma factor that turns on the class 3 genes. Also regulates genes whose products function in a variety of physiological pathways. This is Flagellar transcriptional regulator FlhC from Sodalis glossinidius (strain morsitans).